The sequence spans 121 residues: Large ribosomal subunit protein uL14 (121 aa).

Belongs to the universal ribosomal protein uL14 family. In terms of assembly, part of the 50S ribosomal subunit. Forms a cluster with proteins L3 and L19. In the 70S ribosome, L14 and L19 interact and together make contacts with the 16S rRNA in bridges B5 and B8.

Functionally, binds to 23S rRNA. Forms part of two intersubunit bridges in the 70S ribosome. This chain is Large ribosomal subunit protein uL14, found in Prochlorococcus marinus (strain MIT 9211).